The sequence spans 155 residues: SsrA-binding protein (155 aa).

It belongs to the SmpB family.

Its subcellular location is the cytoplasm. In terms of biological role, required for rescue of stalled ribosomes mediated by trans-translation. Binds to transfer-messenger RNA (tmRNA), required for stable association of tmRNA with ribosomes. tmRNA and SmpB together mimic tRNA shape, replacing the anticodon stem-loop with SmpB. tmRNA is encoded by the ssrA gene; the 2 termini fold to resemble tRNA(Ala) and it encodes a 'tag peptide', a short internal open reading frame. During trans-translation Ala-aminoacylated tmRNA acts like a tRNA, entering the A-site of stalled ribosomes, displacing the stalled mRNA. The ribosome then switches to translate the ORF on the tmRNA; the nascent peptide is terminated with the 'tag peptide' encoded by the tmRNA and targeted for degradation. The ribosome is freed to recommence translation, which seems to be the essential function of trans-translation. The polypeptide is SsrA-binding protein (Bacillus cereus (strain B4264)).